A 227-amino-acid chain; its full sequence is Cytochrome c oxidase subunit 2 (227 aa).

Residues 1–14 (MAYPFQLGLQDATS) are Mitochondrial intermembrane-facing. The chain crosses the membrane as a helical span at residues 15 to 45 (PIMEELTNFHDHTLMIVFLISSLVLYIISLM). Over 46–59 (LTTKLTHTSTMDAQ) the chain is Mitochondrial matrix. The chain crosses the membrane as a helical span at residues 60-87 (EVETIWTILPAAILVLIALPSLRILYMM). The Mitochondrial intermembrane portion of the chain corresponds to 88–227 (DEINNPALTV…YFENWSASMI (140 aa)). Residues H161, C196, E198, C200, H204, and M207 each coordinate Cu cation. E198 lines the Mg(2+) pocket. Y218 carries the phosphotyrosine modification.

The protein belongs to the cytochrome c oxidase subunit 2 family. Component of the cytochrome c oxidase (complex IV, CIV), a multisubunit enzyme composed of 14 subunits. The complex is composed of a catalytic core of 3 subunits MT-CO1, MT-CO2 and MT-CO3, encoded in the mitochondrial DNA, and 11 supernumerary subunits COX4I, COX5A, COX5B, COX6A, COX6B, COX6C, COX7A, COX7B, COX7C, COX8 and NDUFA4, which are encoded in the nuclear genome. The complex exists as a monomer or a dimer and forms supercomplexes (SCs) in the inner mitochondrial membrane with NADH-ubiquinone oxidoreductase (complex I, CI) and ubiquinol-cytochrome c oxidoreductase (cytochrome b-c1 complex, complex III, CIII), resulting in different assemblies (supercomplex SCI(1)III(2)IV(1) and megacomplex MCI(2)III(2)IV(2)). Found in a complex with TMEM177, COA6, COX18, COX20, SCO1 and SCO2. Interacts with TMEM177 in a COX20-dependent manner. Interacts with COX20. Interacts with COX16. Requires Cu cation as cofactor.

The protein resides in the mitochondrion inner membrane. It carries out the reaction 4 Fe(II)-[cytochrome c] + O2 + 8 H(+)(in) = 4 Fe(III)-[cytochrome c] + 2 H2O + 4 H(+)(out). In terms of biological role, component of the cytochrome c oxidase, the last enzyme in the mitochondrial electron transport chain which drives oxidative phosphorylation. The respiratory chain contains 3 multisubunit complexes succinate dehydrogenase (complex II, CII), ubiquinol-cytochrome c oxidoreductase (cytochrome b-c1 complex, complex III, CIII) and cytochrome c oxidase (complex IV, CIV), that cooperate to transfer electrons derived from NADH and succinate to molecular oxygen, creating an electrochemical gradient over the inner membrane that drives transmembrane transport and the ATP synthase. Cytochrome c oxidase is the component of the respiratory chain that catalyzes the reduction of oxygen to water. Electrons originating from reduced cytochrome c in the intermembrane space (IMS) are transferred via the dinuclear copper A center (CU(A)) of subunit 2 and heme A of subunit 1 to the active site in subunit 1, a binuclear center (BNC) formed by heme A3 and copper B (CU(B)). The BNC reduces molecular oxygen to 2 water molecules using 4 electrons from cytochrome c in the IMS and 4 protons from the mitochondrial matrix. This Rhabdomys pumilio (Four-striped grass mouse) protein is Cytochrome c oxidase subunit 2 (MT-CO2).